Consider the following 237-residue polypeptide: Probable glutathione-independent glyoxalase SNO4 (237 aa).

Residues cysteine 138, histidine 139, and glutamate 170 contribute to the active site.

This sequence belongs to the peptidase C56 family. HSP31-like subfamily. As to quaternary structure, homodimer.

The protein localises to the cytoplasm. The protein resides in the P-body. The enzyme catalyses methylglyoxal + H2O = (R)-lactate + H(+). Its function is as follows. Catalyzes the conversion of methylglyoxal (MG) to D-lactate in a single glutathione (GSH)-independent step. May play a role in detoxifying endogenously produced glyoxals. Involved in protection against reactive oxygen species (ROS). Important for viability in stationary phase. May negatively regulate TORC1 in response to nutrient limitation. In Saccharomyces cerevisiae (strain ATCC 204508 / S288c) (Baker's yeast), this protein is Probable glutathione-independent glyoxalase SNO4.